The following is a 445-amino-acid chain: C4-dicarboxylate transport protein 2 (445 aa).

8 consecutive transmembrane segments (helical) span residues isoleucine 24–proline 44, leucine 62–isoleucine 82, leucine 96–leucine 116, glycine 163–glycine 183, phenylalanine 201–phenylalanine 221, leucine 237–alanine 257, alanine 334–threonine 354, and phenylalanine 366–isoleucine 386.

This sequence belongs to the dicarboxylate/amino acid:cation symporter (DAACS) (TC 2.A.23) family.

It is found in the cell inner membrane. In terms of biological role, responsible for the transport of dicarboxylates such as succinate, fumarate, and malate from the periplasm across the membrane. This is C4-dicarboxylate transport protein 2 from Bradyrhizobium sp. (strain ORS 278).